A 137-amino-acid chain; its full sequence is Large ribosomal subunit protein uL16 (137 aa).

The span at 1–21 (MLSPKKVKFRKRQKGRLKGKA) shows a compositional bias: basic residues. Positions 1–22 (MLSPKKVKFRKRQKGRLKGKAQ) are disordered.

Belongs to the universal ribosomal protein uL16 family. Part of the 50S ribosomal subunit.

In terms of biological role, binds 23S rRNA and is also seen to make contacts with the A and possibly P site tRNAs. This is Large ribosomal subunit protein uL16 from Maridesulfovibrio salexigens (strain ATCC 14822 / DSM 2638 / NCIMB 8403 / VKM B-1763) (Desulfovibrio salexigens).